The chain runs to 443 residues: Probable D-serine dehydratase (443 aa).

At Lys116 the chain carries N6-(pyridoxal phosphate)lysine.

This sequence belongs to the serine/threonine dehydratase family. DsdA subfamily. The cofactor is pyridoxal 5'-phosphate.

The enzyme catalyses D-serine = pyruvate + NH4(+). The polypeptide is Probable D-serine dehydratase (Bacillus cereus (strain G9842)).